Reading from the N-terminus, the 167-residue chain is Leptin (167 aa).

An N-terminal signal peptide occupies residues 1 to 21 (MRCGPLYQFLWLWPYLSYVEA). A disulfide bridge connects residues C117 and C167.

The protein belongs to the leptin family.

The protein resides in the secreted. Key player in the regulation of energy balance and body weight control. Once released into the circulation, has central and peripheral effects by binding LEPR, found in many tissues, which results in the activation of several major signaling pathways. In the hypothalamus, acts as an appetite-regulating factor that induces a decrease in food intake and an increase in energy consumption by inducing anorexinogenic factors and suppressing orexigenic neuropeptides, also regulates bone mass and secretion of hypothalamo-pituitary-adrenal hormones. In the periphery, increases basal metabolism, influences reproductive function, regulates pancreatic beta-cell function and insulin secretion, is pro-angiogenic for endothelial cell and affects innate and adaptive immunity. In the arcuate nucleus of the hypothalamus, activates by depolarization POMC neurons inducing FOS and SOCS3 expression to release anorexigenic peptides and inhibits by hyperpolarization NPY neurons inducing SOCS3 with a consequent reduction on release of orexigenic peptides. In addition to its known satiety inducing effect, has a modulatory role in nutrient absorption. In the intestine, reduces glucose absorption by enterocytes by activating PKC and leading to a sequential activation of p38, PI3K and ERK signaling pathways which exerts an inhibitory effect on glucose absorption. Acts as a growth factor on certain tissues, through the activation of different signaling pathways increases expression of genes involved in cell cycle regulation such as CCND1, via JAK2-STAT3 pathway, or VEGFA, via MAPK1/3 and PI3K-AKT1 pathways. May also play an apoptotic role via JAK2-STAT3 pathway and up-regulation of BIRC5 expression. Pro-angiogenic, has mitogenic activity on vascular endothelial cells and plays a role in matrix remodeling by regulating the expression of matrix metalloproteinases (MMPs) and tissue inhibitors of metalloproteinases (TIMPs). In innate immunity, modulates the activity and function of neutrophils by increasing chemotaxis and the secretion of oxygen radicals. Increases phagocytosis by macrophages and enhances secretion of pro-inflammatory mediators. Increases cytotoxic ability of NK cells. Plays a pro-inflammatory role, in synergy with IL1B, by inducing NOS2 which promotes the production of IL6, IL8 and Prostaglandin E2, through a signaling pathway that involves JAK2, PI3K, MAP2K1/MEK1 and MAPK14/p38. In adaptive immunity, promotes the switch of memory T-cells towards T helper-1 cell immune responses. Increases CD4(+)CD25(-) T-cell proliferation and reduces autophagy during TCR (T-cell receptor) stimulation, through MTOR signaling pathway activation and BCL2 up-regulation. This Bubalus bubalis (Domestic water buffalo) protein is Leptin (LEP).